Consider the following 471-residue polypeptide: V-type ATP synthase beta chain (471 aa).

It belongs to the ATPase alpha/beta chains family.

Produces ATP from ADP in the presence of a proton gradient across the membrane. The V-type beta chain is a regulatory subunit. This Streptococcus pyogenes serotype M12 (strain MGAS2096) protein is V-type ATP synthase beta chain.